A 602-amino-acid polypeptide reads, in one-letter code: Proteasome-associated ATPase (602 aa).

Positions Met-1–Ala-13 are enriched in basic and acidic residues. Residues Met-1–Arg-33 are disordered. A compositionally biased stretch (polar residues) spans Thr-23–Ala-32. Positions Ser-28–Gln-103 form a coiled coil. Gly-291–Leu-296 is a binding site for ATP. Residues Tyr-601–Leu-602 are docks into pockets in the proteasome alpha-ring.

It belongs to the AAA ATPase family. As to quaternary structure, homohexamer. Assembles into a hexameric ring structure that caps the 20S proteasome core. Strongly interacts with the prokaryotic ubiquitin-like protein Pup through a hydrophobic interface; the interacting region of ARC lies in its N-terminal coiled-coil domain. There is one Pup binding site per ARC hexamer ring. Upon ATP-binding, the C-terminus of ARC interacts with the alpha-rings of the proteasome core, possibly by binding to the intersubunit pockets.

It functions in the pathway protein degradation; proteasomal Pup-dependent pathway. Functionally, ATPase which is responsible for recognizing, binding, unfolding and translocation of pupylated proteins into the bacterial 20S proteasome core particle. May be essential for opening the gate of the 20S proteasome via an interaction with its C-terminus, thereby allowing substrate entry and access to the site of proteolysis. Thus, the C-termini of the proteasomal ATPase may function like a 'key in a lock' to induce gate opening and therefore regulate proteolysis. In Saccharomonospora viridis (strain ATCC 15386 / DSM 43017 / JCM 3036 / CCUG 5913 / NBRC 12207 / NCIMB 9602 / P101) (Thermoactinomyces viridis), this protein is Proteasome-associated ATPase.